The sequence spans 442 residues: Microfibrillar-associated protein 1 (442 aa).

2 disordered regions span residues 1-34 (MSAP…YGEG) and 113-203 (EVVS…PRLK). Acidic residues-rich tracts occupy residues 134 to 148 (DTSE…DEEI) and 181 to 198 (ESEL…EDEM).

This sequence belongs to the MFAP1 family. In terms of assembly, component of the spliceosome B complex. Interacts with PRPF38A (via N-terminal interaction domain). As to expression, widely expressed.

The protein localises to the nucleus. Its function is as follows. Involved in pre-mRNA splicing as a component of the spliceosome. The chain is Microfibrillar-associated protein 1 from Gallus gallus (Chicken).